Here is a 70-residue protein sequence, read N- to C-terminus: Small ribosomal subunit protein bS21 (70 aa).

It belongs to the bacterial ribosomal protein bS21 family.

The polypeptide is Small ribosomal subunit protein bS21 (Wolinella succinogenes (strain ATCC 29543 / DSM 1740 / CCUG 13145 / JCM 31913 / LMG 7466 / NCTC 11488 / FDC 602W) (Vibrio succinogenes)).